Here is a 431-residue protein sequence, read N- to C-terminus: Forkhead box protein N2 (431 aa).

The segment at residues 112–208 (KPPYSFSLLI…QALKKQPFSS (97 aa)) is a DNA-binding region (fork-head). The interval 364–387 (DSGYASQPCAKISEKGQSGKKMRK) is disordered.

The protein localises to the nucleus. Functionally, binds to the purine-rich region in HTLV-I LTR. This chain is Forkhead box protein N2 (FOXN2), found in Homo sapiens (Human).